The chain runs to 362 residues: MNIKSLLLGSAAALVAASGAQAADAIVAPEPEAVEYVRVCDAYGAGYFYIPGTETCLRVHGYVRYDVKGGDDVYSGTDRNGWDKSARFALRVSTGSETELGTLKTFTELRFNYAANNSGVDGKYGNETSSGTVMEFAYIQLGGLRVGIDESEFHTFTGYLGDVINDDVISAGSYRTGKISYTFTGGNGFSAVIALEQGGDNDGGYTGTTNYHIDGYMPDVVGGLKYAGGWGSIAGVVAYDSVIEEWAAKVRGDVNITDQFSVWLQGAYSSAATPNQNYGQWGGDWAVWGGAKFIATEKATFNLQAAHDDWGKTAVTANVAYELVPGFTVAPEVSYTKFGGEWKNTVAEDNAWGGIVRFQRSF.

The N-terminal stretch at 1-22 is a signal peptide; the sequence is MNIKSLLLGSAAALVAASGAQA.

Belongs to the alphaproteobacteria porin family. In terms of assembly, homotrimer.

The protein resides in the cell outer membrane. In terms of biological role, forms passive diffusion pores that allow small molecular weight hydrophilic materials across the outer membrane. The chain is Porin Omp2b (omp2b) from Brucella neotomae.